The sequence spans 49 residues: Defensin Tm-AMP-D1.2 (49 aa).

Intrachain disulfides connect Cys-3/Cys-49, Cys-14/Cys-34, Cys-20/Cys-43, and Cys-24/Cys-45.

In terms of biological role, plant defense peptide. This Triticum monococcum (Einkorn wheat) protein is Defensin Tm-AMP-D1.2.